The following is a 241-amino-acid chain: MPKSRRSKVLTLAQTEKKGHEGKAALFSGVQQSLDSFDYMWIFDVTNMRNTYLKRIRDDWKGSRIFMGKTKVMAKALGHTPEEEHAENVSKLTKLLHGAVGLLFTNSKPDEVIGYFESFVQNDFARAGAVAPFTHVIPAGPVYSRAGQIPVEDDILLTHTLEPQVRQLGMPTVLKNGVVTLLADFPLCTEGQQLDSRQTRLLKLFGITAAEFKVGLLGYYSKKGASVEFLQSAPGADEAME.

The protein belongs to the universal ribosomal protein uL10 family. In terms of assembly, associates with the pre-60S ribosomal particle.

It is found in the nucleus. Its subcellular location is the nucleolus. It localises to the cytoplasm. Functionally, component of the ribosome assembly machinery. Nuclear paralog of the ribosomal protein P0, it binds pre-60S subunits at an early stage of assembly in the nucleolus, and is replaced by P0 in cytoplasmic pre-60S subunits and mature 80S ribosomes. This is Ribosome assembly factor mrt4 from Schizosaccharomyces pombe (strain 972 / ATCC 24843) (Fission yeast).